Here is a 439-residue protein sequence, read N- to C-terminus: Serine/threonine-protein kinase 2 (439 aa).

The Protein kinase domain occupies 87–439 (NDDFYHISTG…IFSDWINGGN (353 aa)). Residues 93-101 (ISTGGYGIV) and lysine 117 contribute to the ATP site. The active-site Proton acceptor is aspartate 307.

It belongs to the protein kinase superfamily. Ser/Thr protein kinase family. Phosphorylated in vivo. Autophosphorylated in vitro.

It localises to the host endoplasmic reticulum. It is found in the host endoplasmic reticulum-Golgi intermediate compartment. It catalyses the reaction L-seryl-[protein] + ATP = O-phospho-L-seryl-[protein] + ADP + H(+). The catalysed reaction is L-threonyl-[protein] + ATP = O-phospho-L-threonyl-[protein] + ADP + H(+). Its function is as follows. Essential serine-protein kinase involved in the early stage of virion morphogenesis. This is Serine/threonine-protein kinase 2 (OPG054) from Bos taurus (Bovine).